Here is a 159-residue protein sequence, read N- to C-terminus: Endoribonuclease YbeY (159 aa).

3 residues coordinate Zn(2+): His-119, His-123, and His-129.

The protein belongs to the endoribonuclease YbeY family. Zn(2+) is required as a cofactor.

The protein resides in the cytoplasm. Its function is as follows. Single strand-specific metallo-endoribonuclease involved in late-stage 70S ribosome quality control and in maturation of the 3' terminus of the 16S rRNA. The sequence is that of Endoribonuclease YbeY from Acinetobacter baylyi (strain ATCC 33305 / BD413 / ADP1).